Consider the following 129-residue polypeptide: NADH-quinone oxidoreductase subunit A (129 aa).

3 consecutive transmembrane segments (helical) span residues 9-29 (FPIGVVLLVAVVLAFTMLGLA), 68-88 (LLFIVFDIEAIFLYPWAVLLL), and 97-117 (LGWPGFISMGIFVFTLVAGLV).

The protein belongs to the complex I subunit 3 family. As to quaternary structure, NDH-1 is composed of 14 different subunits. Subunits NuoA, H, J, K, L, M, N constitute the membrane sector of the complex.

Its subcellular location is the cell inner membrane. The enzyme catalyses a quinone + NADH + 5 H(+)(in) = a quinol + NAD(+) + 4 H(+)(out). Its function is as follows. NDH-1 shuttles electrons from NADH, via FMN and iron-sulfur (Fe-S) centers, to quinones in the respiratory chain. The immediate electron acceptor for the enzyme in this species is believed to be ubiquinone. Couples the redox reaction to proton translocation (for every two electrons transferred, four hydrogen ions are translocated across the cytoplasmic membrane), and thus conserves the redox energy in a proton gradient. This chain is NADH-quinone oxidoreductase subunit A, found in Anaeromyxobacter dehalogenans (strain 2CP-C).